A 401-amino-acid polypeptide reads, in one-letter code: Imidazolonepropionase (401 aa).

Fe(3+)-binding residues include His-70 and His-72. Residues His-70 and His-72 each coordinate Zn(2+). Positions 79, 142, and 175 each coordinate 4-imidazolone-5-propanoate. Tyr-142 serves as a coordination point for N-formimidoyl-L-glutamate. Fe(3+) is bound at residue His-238. His-238 contributes to the Zn(2+) binding site. Position 241 (Gln-241) interacts with 4-imidazolone-5-propanoate. Residue Asp-313 participates in Fe(3+) binding. A Zn(2+)-binding site is contributed by Asp-313. Residues Asn-315 and Gly-317 each coordinate N-formimidoyl-L-glutamate. Thr-318 contributes to the 4-imidazolone-5-propanoate binding site.

The protein belongs to the metallo-dependent hydrolases superfamily. HutI family. It depends on Zn(2+) as a cofactor. Fe(3+) is required as a cofactor.

The protein resides in the cytoplasm. It carries out the reaction 4-imidazolone-5-propanoate + H2O = N-formimidoyl-L-glutamate. Its pathway is amino-acid degradation; L-histidine degradation into L-glutamate; N-formimidoyl-L-glutamate from L-histidine: step 3/3. Functionally, catalyzes the hydrolytic cleavage of the carbon-nitrogen bond in imidazolone-5-propanoate to yield N-formimidoyl-L-glutamate. It is the third step in the universal histidine degradation pathway. The chain is Imidazolonepropionase from Xanthomonas axonopodis pv. citri (strain 306).